The sequence spans 601 residues: Glutathione-regulated potassium-efflux system protein KefB (601 aa).

A run of 13 helical transmembrane segments spans residues 4–24, 29–49, 55–75, 87–107, 115–135, 152–172, 177–197, 207–227, 230–250, 268–288, 291–311, 324–344, and 356–376; these read SDFL…VPLA, IGAV…GLGF, EILH…GLEL, IFGV…GLLM, AAVV…LQLM, VLLF…LLAG, HFDW…LIGG, FIAA…LVLG, LFMD…GVLL, GLLL…GVLY, LLWV…VLYL, MQFA…FSTA, and ALLL…MKLV. The 120-residue stretch at 400–519 folds into the RCK N-terminal domain; sequence KPQVIVVGFG…AGVTQFSRET (120 aa).

This sequence belongs to the monovalent cation:proton antiporter 2 (CPA2) transporter (TC 2.A.37) family. KefB subfamily. Interacts with the regulatory subunit KefG.

The protein resides in the cell inner membrane. Its activity is regulated as follows. Activated by adducts between glutathione and electrophiles. In terms of biological role, pore-forming subunit of a potassium efflux system that confers protection against electrophiles. Catalyzes K(+)/H(+) antiport. The polypeptide is Glutathione-regulated potassium-efflux system protein KefB (Escherichia coli (strain K12)).